A 302-amino-acid polypeptide reads, in one-letter code: Recombination-associated protein RdgC (302 aa).

The protein belongs to the RdgC family.

It localises to the cytoplasm. It is found in the nucleoid. Its function is as follows. May be involved in recombination. This Mannheimia succiniciproducens (strain KCTC 0769BP / MBEL55E) protein is Recombination-associated protein RdgC.